Consider the following 307-residue polypeptide: tRNA dimethylallyltransferase (307 aa).

Gly-16–Thr-23 serves as a coordination point for ATP. Residue Thr-18–Thr-23 coordinates substrate. The interval Asp-41 to Leu-44 is interaction with substrate tRNA.

Belongs to the IPP transferase family. Monomer. It depends on Mg(2+) as a cofactor.

It catalyses the reaction adenosine(37) in tRNA + dimethylallyl diphosphate = N(6)-dimethylallyladenosine(37) in tRNA + diphosphate. Catalyzes the transfer of a dimethylallyl group onto the adenine at position 37 in tRNAs that read codons beginning with uridine, leading to the formation of N6-(dimethylallyl)adenosine (i(6)A). In Opitutus terrae (strain DSM 11246 / JCM 15787 / PB90-1), this protein is tRNA dimethylallyltransferase.